The primary structure comprises 577 residues: Glucose-6-phosphate 1-dehydrogenase, chloroplastic (577 aa).

Positions 1-20 (MGVQLRLNPCSSSSAATSPS) are disordered. The transit peptide at 1–63 (MGVQLRLNPC…QPRKHFEVFS (63 aa)) directs the protein to the chloroplast. The span at 11-20 (SSSSAATSPS) shows a compositional bias: low complexity. NADP(+) contacts are provided by residues 97–104 (GASGDLAK) and Arg131. Residues Cys149 and Cys157 are joined by a disulfide bond. Residue Lys234 participates in NADP(+) binding. Residues Lys234, 264-268 (HYLGK), Glu302, and Asp321 contribute to the D-glucose 6-phosphate site. Catalysis depends on His326, which acts as the Proton acceptor. Position 419 (Lys419) interacts with NADP(+). The D-glucose 6-phosphate site is built by Lys422 and Lys427. NADP(+) is bound by residues Arg428, Arg432, and Arg461. Gln463 lines the D-glucose 6-phosphate pocket. NADP(+) is bound by residues 469–471 (YLK) and Arg554.

It belongs to the glucose-6-phosphate dehydrogenase family. In terms of assembly, homodimer. In terms of tissue distribution, green tissues, leaves and chloroplasts.

The protein localises to the plastid. It is found in the chloroplast. It carries out the reaction D-glucose 6-phosphate + NADP(+) = 6-phospho-D-glucono-1,5-lactone + NADPH + H(+). Its pathway is carbohydrate degradation; pentose phosphate pathway; D-ribulose 5-phosphate from D-glucose 6-phosphate (oxidative stage): step 1/3. With respect to regulation, regulated by metabolites. Post-translationally inactivated by cysteine-mediated redox modification via the ferredoxin-thioredoxin system in the light and this avoids futile cycles with photosynthetic CO2 fixation. Its function is as follows. Catalyzes the rate-limiting step of the oxidative pentose-phosphate pathway, which represents a route for the dissimilation of carbohydrates besides glycolysis. The main function of this enzyme is to provide reducing power (NADPH) and pentose phosphates for fatty acid and nucleic acid synthesis which are involved in membrane synthesis and cell division. The chain is Glucose-6-phosphate 1-dehydrogenase, chloroplastic from Solanum tuberosum (Potato).